Reading from the N-terminus, the 105-residue chain is Hydrogen cyanide synthase subunit HcnA (105 aa).

Residues 16–97 (ADMTISLNGQ…GMQVQTLSNR (82 aa)) form the 2Fe-2S ferredoxin-type domain. [2Fe-2S] cluster is bound by residues C60, C65, C68, and C81.

Heterotrimer of HcnA, HcnB and HcnC.

The protein resides in the cell membrane. The catalysed reaction is glycine + 2 A = hydrogen cyanide + 2 AH2 + CO2. In terms of biological role, a three-component membrane-bound flavoenzyme that catalyzes the formation of hydrogen cyanide, a secondary metabolite, by transfer of electrons to a cyanide-resistant branch of the aerobic respiratory chain. Contributes to suppression of black root rot of tobacco. The chain is Hydrogen cyanide synthase subunit HcnA from Pseudomonas protegens (strain DSM 19095 / LMG 27888 / CFBP 6595 / CHA0).